The primary structure comprises 542 residues: Putative leucine aminopeptidase 1 (542 aa).

2 residues coordinate Mn(2+): Lys294 and Asp299. The active site involves Lys323. Mn(2+) is bound by residues Asp336, Asp396, and Glu398. Arg400 is an active-site residue.

This sequence belongs to the peptidase M17 family. In terms of assembly, homohexamer (dimer of homotrimers). Requires Mn(2+) as cofactor.

The protein resides in the cytoplasm. The catalysed reaction is Release of an N-terminal amino acid, Xaa-|-Yaa-, in which Xaa is preferably Leu, but may be other amino acids including Pro although not Arg or Lys, and Yaa may be Pro. Amino acid amides and methyl esters are also readily hydrolyzed, but rates on arylamides are exceedingly low.. The enzyme catalyses Release of N-terminal proline from a peptide.. In terms of biological role, presumably involved in the processing and regular turnover of intracellular proteins. Catalyzes the removal of unsubstituted N-terminal amino acids from various peptides. This is Putative leucine aminopeptidase 1 from Oryza sativa subsp. japonica (Rice).